The chain runs to 345 residues: N-acetyl-gamma-glutamyl-phosphate reductase (345 aa).

Residue Cys149 is part of the active site.

It belongs to the NAGSA dehydrogenase family. Type 1 subfamily.

It is found in the cytoplasm. It catalyses the reaction N-acetyl-L-glutamate 5-semialdehyde + phosphate + NADP(+) = N-acetyl-L-glutamyl 5-phosphate + NADPH + H(+). The protein operates within amino-acid biosynthesis; L-arginine biosynthesis; N(2)-acetyl-L-ornithine from L-glutamate: step 3/4. Functionally, catalyzes the NADPH-dependent reduction of N-acetyl-5-glutamyl phosphate to yield N-acetyl-L-glutamate 5-semialdehyde. The chain is N-acetyl-gamma-glutamyl-phosphate reductase from Halalkalibacterium halodurans (strain ATCC BAA-125 / DSM 18197 / FERM 7344 / JCM 9153 / C-125) (Bacillus halodurans).